Here is a 330-residue protein sequence, read N- to C-terminus: MDRVLPFRFAEEEGVFWLLDQRRLPQEEVYVPVRTAREMAQAIRDMVVRGAPAIGVSAAFGMVLAHLAGEDLEEADRRLRASRPTAVNLFHALDRMRPFWGDLAGSLLEARRIWREVEETEAAISRHGAQVLWGQVLTHCNTGPLATGGYGTALGAIVEAYRLGRVRHVWVDETRPYLQGARLTAYELQKAGVPATLITDGMAGWLMARGAVDAVVVGVDRMALNGDFANKVGTYALAVLAHHHGIPFYAALPLSSVDPRLASGEGIPIEERSPEEVVAFRGVRIAPEGFPAYHPAFDVTPHRYLTGIITEKGVLYPPFAEGLRRALGLD.

Substrate contacts are provided by residues 49-51, Arg83, and Gln179; that span reads RGA. The active-site Proton donor is the Asp220. Position 230 to 231 (230 to 231) interacts with substrate; it reads NK.

The protein belongs to the eIF-2B alpha/beta/delta subunits family. MtnA subfamily.

It carries out the reaction 5-(methylsulfanyl)-alpha-D-ribose 1-phosphate = 5-(methylsulfanyl)-D-ribulose 1-phosphate. It functions in the pathway amino-acid biosynthesis; L-methionine biosynthesis via salvage pathway; L-methionine from S-methyl-5-thio-alpha-D-ribose 1-phosphate: step 1/6. Its function is as follows. Catalyzes the interconversion of methylthioribose-1-phosphate (MTR-1-P) into methylthioribulose-1-phosphate (MTRu-1-P). This is Methylthioribose-1-phosphate isomerase from Thermus thermophilus (strain ATCC 27634 / DSM 579 / HB8).